The sequence spans 500 residues: Monocarboxylate transporter 1 (500 aa).

Topologically, residues 1–22 are cytoplasmic; the sequence is MPPAVGGPVGYTPPDGGWGWAV. Residues 23–44 traverse the membrane as a helical segment; it reads VIGAFISIGFSYAFPKSITVFF. Residue Lys38 coordinates (S)-lactate. The Extracellular portion of the chain corresponds to 45 to 55; the sequence is KEIEGIFHATT. The helical transmembrane segment at 56–80 threads the bilayer; the sequence is SEVSWISSIMLAVMYGGGPISSILV. The Cytoplasmic portion of the chain corresponds to 81-84; the sequence is NKYG. The helical transmembrane segment at 85–105 threads the bilayer; sequence SRIVMIVGGCLSGCGLIAASF. Over 106 to 109 the chain is Extracellular; it reads CNTV. A helical transmembrane segment spans residues 110 to 132; the sequence is QQLYVCIGVIGGLGLAFNLNPAL. At 133–146 the chain is on the cytoplasmic side; the sequence is TMIGKYFYKRRPLA. A helical transmembrane segment spans residues 147 to 169; that stretch reads NGLAMAGSPVFLCTLAPLNQVFF. Residues 170–174 are Extracellular-facing; sequence GIFGW. Residues 175 to 194 form a helical membrane-spanning segment; sequence RGSFLILGGLLLNCCVAGAL. At 195-261 the chain is on the cytoplasmic side; sequence MRPIGPKPTK…FLDLTLFTHR (67 aa). Phosphoserine occurs at positions 210 and 213. The residue at position 231 (Thr231) is a Phosphothreonine. Residues 262-288 form a helical membrane-spanning segment; it reads GFLLYLSGNVIMFFGLFAPLVFLSSYG. Residues 289-295 are Extracellular-facing; the sequence is KSQHYSS. A helical transmembrane segment spans residues 296-317; that stretch reads EKSAFLLSILAFVDMVARPSMG. Asp309 is a H(+) binding site. Arg313 contributes to the (S)-lactate binding site. The Cytoplasmic segment spans residues 318-328; sequence LVANTKPIRPR. The helical transmembrane segment at 329–349 threads the bilayer; the sequence is IQYFFAASVVANGVCHMLAPL. At 350–353 the chain is on the extracellular side; it reads STTY. Residues 354–375 traverse the membrane as a helical segment; sequence VGFCVYAGFFGFAFGWLSSVLF. Residues 376 to 389 are Cytoplasmic-facing; it reads ETLMDLVGPQRFSS. A helical membrane pass occupies residues 390-410; that stretch reads AVGLVTIVECCPVLLGPPLLG. Over 411–421 the chain is Extracellular; the sequence is RLNDMYGDYKY. Residues 422–443 form a helical membrane-spanning segment; the sequence is TYWACGVVLIISGIYLFIGMGI. Residues 444–500 lie on the Cytoplasmic side of the membrane; it reads NYRLLAKEQKANEQKKESKEEETSIDVAGKPNEVTKAAESPDQKDTDGGPKEEESPV. The span at 454–465 shows a compositional bias: basic and acidic residues; sequence ANEQKKESKEEE. The disordered stretch occupies residues 454–500; that stretch reads ANEQKKESKEEETSIDVAGKPNEVTKAAESPDQKDTDGGPKEEESPV. Ser461 bears the Phosphoserine mark. Position 466 is a phosphothreonine (Thr466). Residues Ser467, Ser483, and Ser498 each carry the phosphoserine modification. The span at 482–500 shows a compositional bias: basic and acidic residues; it reads ESPDQKDTDGGPKEEESPV.

This sequence belongs to the major facilitator superfamily. Monocarboxylate porter (TC 2.A.1.13) family. In terms of assembly, interacts with EMB; interaction mediates SLC16A1 targeting to the plasma membrane. Interacts with isoform 2 of BSG; interaction mediates SLC16A1 targeting to the plasma membrane. As to expression, widely expressed. Detected in heart and in blood lymphocytes and monocytes (at protein level).

The protein resides in the cell membrane. It localises to the basolateral cell membrane. The protein localises to the apical cell membrane. The catalysed reaction is (S)-lactate(in) + H(+)(in) = (S)-lactate(out) + H(+)(out). It carries out the reaction acetate(out) + H(+)(out) = acetate(in) + H(+)(in). The enzyme catalyses acetoacetate(out) + H(+)(out) = acetoacetate(in) + H(+)(in). It catalyses the reaction pyruvate(out) + H(+)(out) = pyruvate(in) + H(+)(in). The catalysed reaction is (R)-3-hydroxybutanoate(out) + H(+)(out) = (R)-3-hydroxybutanoate(in) + H(+)(in). It carries out the reaction 3-methyl-2-oxobutanoate(out) + H(+)(out) = 3-methyl-2-oxobutanoate(in) + H(+)(in). The enzyme catalyses 4-methyl-2-oxopentanoate(out) + H(+)(out) = 4-methyl-2-oxopentanoate(in) + H(+)(in). It catalyses the reaction succinate(in) + 2 H(+)(in) = succinate(out) + 2 H(+)(out). Selectively inhibited by AZD3965, that acts as a competitive inhibitor binding to the central channel in the outward open conformation. In terms of biological role, bidirectional proton-coupled monocarboxylate transporter. Catalyzes the rapid transport across the plasma membrane of many monocarboxylates such as lactate, pyruvate, acetate and the ketone bodies acetoacetate and beta-hydroxybutyrate, and thus contributes to the maintenance of intracellular pH. The transport direction is determined by the proton motive force and the concentration gradient of the substrate monocarboxylate. MCT1 is a major lactate exporter. Plays a role in cellular responses to a high-fat diet by modulating the cellular levels of lactate and pyruvate that contribute to the regulation of central metabolic pathways and insulin secretion, with concomitant effects on plasma insulin levels and blood glucose homeostasis. Facilitates the protonated monocarboxylate form of succinate export, that its transient protonation upon muscle cell acidification in exercising muscle and ischemic heart. Functions via alternate outward- and inward-open conformation states. Protonation and deprotonation of 309-Asp is essential for the conformational transition. This is Monocarboxylate transporter 1 from Homo sapiens (Human).